A 208-amino-acid chain; its full sequence is Small ribosomal subunit protein uS4 (208 aa).

One can recognise an S4 RNA-binding domain in the interval 95 to 159 (RRIDNIVYRA…FKKLVRSNIE (65 aa)).

It belongs to the universal ribosomal protein uS4 family. In terms of assembly, part of the 30S ribosomal subunit. Contacts protein S5. The interaction surface between S4 and S5 is involved in control of translational fidelity.

One of the primary rRNA binding proteins, it binds directly to 16S rRNA where it nucleates assembly of the body of the 30S subunit. In terms of biological role, with S5 and S12 plays an important role in translational accuracy. The protein is Small ribosomal subunit protein uS4 of Borrelia recurrentis (strain A1).